A 260-amino-acid chain; its full sequence is Cytochrome c oxidase subunit 3 (260 aa).

Transmembrane regions (helical) follow at residues 30-50 (LILWFHINSTILFILGTVLLV), 81-101 (GMILFITSEVCLFFAFFWAFF), 126-146 (FLVPLLNTAVLLSSGVTVTWA), 158-178 (AIQSLTLTVFLGVYFTILQAW), 196-216 (FFVATGFHGLHVLIGTAFLAV), and 239-259 (WYWHFVDVVWLFLYICIYWWG).

Belongs to the cytochrome c oxidase subunit 3 family. As to quaternary structure, component of the cytochrome c oxidase (complex IV, CIV), a multisubunit enzyme composed of a catalytic core of 3 subunits and several supernumerary subunits. The complex exists as a monomer or a dimer and forms supercomplexes (SCs) in the inner mitochondrial membrane with ubiquinol-cytochrome c oxidoreductase (cytochrome b-c1 complex, complex III, CIII).

It is found in the mitochondrion inner membrane. It catalyses the reaction 4 Fe(II)-[cytochrome c] + O2 + 8 H(+)(in) = 4 Fe(III)-[cytochrome c] + 2 H2O + 4 H(+)(out). Component of the cytochrome c oxidase, the last enzyme in the mitochondrial electron transport chain which drives oxidative phosphorylation. The respiratory chain contains 3 multisubunit complexes succinate dehydrogenase (complex II, CII), ubiquinol-cytochrome c oxidoreductase (cytochrome b-c1 complex, complex III, CIII) and cytochrome c oxidase (complex IV, CIV), that cooperate to transfer electrons derived from NADH and succinate to molecular oxygen, creating an electrochemical gradient over the inner membrane that drives transmembrane transport and the ATP synthase. Cytochrome c oxidase is the component of the respiratory chain that catalyzes the reduction of oxygen to water. Electrons originating from reduced cytochrome c in the intermembrane space (IMS) are transferred via the dinuclear copper A center (CU(A)) of subunit 2 and heme A of subunit 1 to the active site in subunit 1, a binuclear center (BNC) formed by heme A3 and copper B (CU(B)). The BNC reduces molecular oxygen to 2 water molecules using 4 electrons from cytochrome c in the IMS and 4 protons from the mitochondrial matrix. This chain is Cytochrome c oxidase subunit 3 (COIII), found in Pisaster ochraceus (Ochre sea star).